The chain runs to 429 residues: Histidine--tRNA ligase (429 aa).

The protein belongs to the class-II aminoacyl-tRNA synthetase family. In terms of assembly, homodimer.

Its subcellular location is the cytoplasm. It carries out the reaction tRNA(His) + L-histidine + ATP = L-histidyl-tRNA(His) + AMP + diphosphate + H(+). This chain is Histidine--tRNA ligase, found in Escherichia fergusonii (strain ATCC 35469 / DSM 13698 / CCUG 18766 / IAM 14443 / JCM 21226 / LMG 7866 / NBRC 102419 / NCTC 12128 / CDC 0568-73).